The chain runs to 439 residues: Microfibrillar-associated protein 1A (439 aa).

The interval 1-200 is disordered; the sequence is MSVPSALMKQ…SEDEMEPRLK (200 aa). At Ser2 the chain carries N-acetylserine. The segment covering 23–34 has biased composition (basic and acidic residues); that stretch reads RNEKGEISMEKV. Phosphoserine is present on residues Ser52 and Ser53. Basic and acidic residues predominate over residues 61–70; sequence QFIKKAKEQE. Lys67 is covalently cross-linked (Glycyl lysine isopeptide (Lys-Gly) (interchain with G-Cter in SUMO2)). Residues 71-81 show a composition bias toward acidic residues; the sequence is AEPEEQEEDSS. Phosphoserine is present on residues Ser94, Ser116, Ser118, Ser132, and Ser133. Acidic residues-rich tracts occupy residues 112-122 and 131-144; these read VVGESDSEVEG and DSSE…DDEE. Residues 145–163 are compositionally biased toward basic and acidic residues; that stretch reads IERRRGMMRQRAQERKNEE. A compositionally biased stretch (acidic residues) spans 178-195; that stretch reads ESESESEYEEYTDSEDEM. Lys249 participates in a covalent cross-link: Glycyl lysine isopeptide (Lys-Gly) (interchain with G-Cter in SUMO2). Thr267 is subject to Phosphothreonine. A Glycyl lysine isopeptide (Lys-Gly) (interchain with G-Cter in SUMO2) cross-link involves residue Lys357. A Phosphoserine modification is found at Ser361. Glycyl lysine isopeptide (Lys-Gly) (interchain with G-Cter in SUMO2) cross-links involve residues Lys371, Lys381, Lys415, and Lys418. The residue at position 432 (Ser432) is a Phosphoserine.

This sequence belongs to the MFAP1 family. As to quaternary structure, component of the spliceosome B complex. Interacts with PRPF38A (via N-terminal interaction domain).

It is found in the nucleus. In terms of biological role, involved in pre-mRNA splicing as a component of the spliceosome. The sequence is that of Microfibrillar-associated protein 1A from Mus musculus (Mouse).